We begin with the raw amino-acid sequence, 226 residues long: Cytidylate kinase (226 aa).

12–20 (GPSGAGKGT) contacts ATP.

This sequence belongs to the cytidylate kinase family. Type 1 subfamily.

It localises to the cytoplasm. The enzyme catalyses CMP + ATP = CDP + ADP. It carries out the reaction dCMP + ATP = dCDP + ADP. In Vibrio vulnificus (strain CMCP6), this protein is Cytidylate kinase.